The sequence spans 82 residues: Small ribosomal subunit protein bS16 (82 aa).

It belongs to the bacterial ribosomal protein bS16 family.

In Aliivibrio fischeri (strain ATCC 700601 / ES114) (Vibrio fischeri), this protein is Small ribosomal subunit protein bS16.